We begin with the raw amino-acid sequence, 212 residues long: MEKDTGTTHRRHRPGLRALPSGVALGHLKAASEASELQRSRSLGGLQPEGDPPSRPRKPHKELESEDQGKDPSSNAEDASCQKNLAQDKKESFSTLGKLGHESGKQDPEREKSDLEASMQEVQEGEHADGGLQEAKEQEAESIKLNDLQEEEKASVFVEIDLGDHAEEVVTDAKKEEKPSQMDVEDLSEDEMQTSWVCCIPYSTRKRAKEST.

Disordered stretches follow at residues 1–148 and 168–190; these read MEKD…LNDL and EVVT…LSED. Residues 61–70 are compositionally biased toward basic and acidic residues; it reads KELESEDQGK. The span at 71 to 85 shows a compositional bias: polar residues; the sequence is DPSSNAEDASCQKNL. 3 stretches are compositionally biased toward basic and acidic residues: residues 99–115, 124–144, and 168–180; these read LGHE…KSDL, EGEH…ESIK, and EVVT…EKPS.

This is an uncharacterized protein from Homo sapiens (Human).